We begin with the raw amino-acid sequence, 882 residues long: Alanine--tRNA ligase (882 aa).

Zn(2+)-binding residues include His571, His575, Cys673, and His677.

The protein belongs to the class-II aminoacyl-tRNA synthetase family. Zn(2+) is required as a cofactor.

The protein resides in the cytoplasm. It catalyses the reaction tRNA(Ala) + L-alanine + ATP = L-alanyl-tRNA(Ala) + AMP + diphosphate. In terms of biological role, catalyzes the attachment of alanine to tRNA(Ala) in a two-step reaction: alanine is first activated by ATP to form Ala-AMP and then transferred to the acceptor end of tRNA(Ala). Also edits incorrectly charged Ser-tRNA(Ala) and Gly-tRNA(Ala) via its editing domain. This is Alanine--tRNA ligase from Desulfotalea psychrophila (strain LSv54 / DSM 12343).